The primary structure comprises 97 residues: Co-chaperonin GroES (97 aa).

It belongs to the GroES chaperonin family. In terms of assembly, heptamer of 7 subunits arranged in a ring. Interacts with the chaperonin GroEL.

It is found in the cytoplasm. In terms of biological role, together with the chaperonin GroEL, plays an essential role in assisting protein folding. The GroEL-GroES system forms a nano-cage that allows encapsulation of the non-native substrate proteins and provides a physical environment optimized to promote and accelerate protein folding. GroES binds to the apical surface of the GroEL ring, thereby capping the opening of the GroEL channel. This is Co-chaperonin GroES from Stutzerimonas stutzeri (strain A1501) (Pseudomonas stutzeri).